The sequence spans 525 residues: MTENIHKHRILILDFGSQYTQLVARRVRELGVYCELWAWDVTEAQIRDFNPSGIILSGGPESTTEENSPRAPQYVFEAGVPVFGVCYGMQTMAMQLGGHVEASNEREFGYAQVEVVNDSALVRGIEDALTADGKPLLDVWMSHGDKVTAIPSDFVTVASTESCPFAIMANEEKRFYGVQFHPEVTHTRQGMRMLERFVRDICQCEALWTPAKIIDDAVARIREQVGDDKVILGLSGGVDSSVTAMLLHRAIGKNLTCVFVDNGLLRLSEAEQVLDMFGDHFGLNIVHVPAEDRFLSALAGENDPEAKRKIIGRVFVEVFDEEALKLEDVKWLAQGTIYPDVIESAASATGKAHVIKSHHNVGGLPKEMKMGLVEPLKELFKDEVRKIGLELGLPYDMLYRHPFPGPGLGVRVLGEVKKEYCDLLRRADAIFIEELRKADLYDKVSQAFTVFLPVRSVGVMGDGRKYDWVVSLRAVETIDFMTAHWAHLPYDFLGRVSNRIINEVNGISRVVYDISGKPPATIEWE.

The Glutamine amidotransferase type-1 domain maps to 9–207 (RILILDFGSQ…VRDICQCEAL (199 aa)). C86 (nucleophile) is an active-site residue. Active-site residues include H181 and E183. Residues 208-400 (WTPAKIIDDA…LGLPYDMLYR (193 aa)) enclose the GMPS ATP-PPase domain. ATP is bound at residue 235–241 (SGGVDSS).

As to quaternary structure, homodimer.

The catalysed reaction is XMP + L-glutamine + ATP + H2O = GMP + L-glutamate + AMP + diphosphate + 2 H(+). Its pathway is purine metabolism; GMP biosynthesis; GMP from XMP (L-Gln route): step 1/1. Its function is as follows. Catalyzes the synthesis of GMP from XMP. The chain is GMP synthase [glutamine-hydrolyzing] from Escherichia coli O139:H28 (strain E24377A / ETEC).